A 1259-amino-acid chain; its full sequence is Lysine-specific demethylase 2B (1259 aa).

The 169-residue stretch at 147–315 (FSHTKLERVV…MQLRVFEIED (169 aa)) folds into the JmjC domain. Residue Thr-208 participates in substrate binding. His-211 and Asp-213 together coordinate Fe cation. A substrate-binding site is contributed by Lys-228. His-283 is a Fe cation binding site. Residues 388–402 (EEKGNLVEKPSKQSG) show a composition bias toward basic and acidic residues. 2 disordered regions span residues 388–463 (EEKG…ATDM) and 536–562 (KPSKNRAVGRPKGKIASSPAVKLSANR). Over residues 403–413 (DESSTTNSTHS) the composition is skewed to polar residues. Over residues 414–423 (NGKDAAEKKQ) the composition is skewed to basic and acidic residues. Polar residues predominate over residues 426–437 (TLMQQLKRTLSN). The span at 536–548 (KPSKNRAVGRPKG) shows a compositional bias: basic residues. Residues 567–613 (ARRRRTRCRKCEACLRTECGECHFCKDMKKFGGPGRMKQSCIMRQCI) form a CXXC-type zinc finger. Positions 574, 577, 580, 585, 588, 591, 607, 612, 623, 626, 649, 652, 657, 660, 680, and 683 each coordinate Zn(2+). The PHD-type zinc-finger motif lies at 620–686 (TAVCLVCGEA…CWECPKCNHA (67 aa)). Composition is skewed to basic and acidic residues over residues 729–763 (KKKVEREETPKQIPEEQPKKKPTEGIIKKKPEDGH) and 771–790 (EKPPDPSVRKRLKLVKEEKL). The interval 729-958 (KKKVEREETP…PPPSLSPPKC (230 aa)) is disordered. Residues 835-848 (SRSSSPTAGPSTEG) are compositionally biased toward polar residues. Residues 854-863 (KKKIRRKRRV) show a composition bias toward basic residues. The span at 864 to 877 (SNKELSKELSKELN) shows a compositional bias: basic and acidic residues. Residues 864–891 (SNKELSKELSKELNQEIQKTESSLASEN) adopt a coiled-coil conformation. The segment covering 878-889 (QEIQKTESSLAS) has biased composition (polar residues). Basic and acidic residues predominate over residues 890 to 908 (ENHHPIKSEPESDNEESKK). Positions 985–1030 (AHVMQREVWMAIFSYLSHRDLCICMRICRTWNRWCCDKRLWTQIDL) constitute an F-box domain. LRR repeat units lie at residues 1056-1081 (WTNISKKQLSWLINRLPALRDLNLSG), 1082-1105 (CSWIAVSALCSSCCPLLRTLNVQW), 1145-1170 (GLDITDASLRLMIRHMPLLAKLDLSY), 1171-1200 (CNHVTDQSINLLTAVGTSTRDTLLEMNLSD), and 1201-1225 (CNNVTDQCLTFFKRCGNICLIDLRF).

The protein belongs to the JHDM1 histone demethylase family. It depends on Fe(2+) as a cofactor.

The protein resides in the nucleus. The protein localises to the nucleolus. Its subcellular location is the chromosome. The enzyme catalyses N(6),N(6)-dimethyl-L-lysyl(36)-[histone H3] + 2 2-oxoglutarate + 2 O2 = L-lysyl(36)-[histone H3] + 2 formaldehyde + 2 succinate + 2 CO2. Histone demethylase activity is inhibited by fumarate. Functionally, histone demethylase that demethylates 'Lys-4' and 'Lys-36' of histone H3, thereby playing a central role in histone code. Preferentially demethylates trimethylated H3 'Lys-4' and dimethylated H3 'Lys-36' residue while it has weak or no activity for mono- and tri-methylated H3 'Lys-36'. Preferentially binds the transcribed region of ribosomal RNA and represses the transcription of ribosomal RNA genes which inhibits cell growth and proliferation. The protein is Lysine-specific demethylase 2B (kdm2b) of Xenopus laevis (African clawed frog).